Reading from the N-terminus, the 301-residue chain is Tetratricopeptide repeat domain-containing protein PYG7, chloroplastic (301 aa).

The N-terminal 61 residues, 1–61 (MFESNMVLQT…FHDYVFAEIS (61 aa)), are a transit peptide targeting the chloroplast. Transmembrane regions (helical) follow at residues 82–102 (TFLL…AAAA) and 121–141 (IQLS…FYVI). TPR repeat units lie at residues 168–201 (ATEL…WDGD), 206–239 (AQVY…QPGY), and 240–273 (VTAW…DPNN).

In terms of assembly, interacts with PSA3.

It is found in the plastid. The protein resides in the chloroplast thylakoid membrane. Its function is as follows. Nuclear genome-encoded factor required for the accumulation of photosystem I (PSI). Functions as a PSI biogenesis factor. Cooperates with PSA3 to promote the stable assembly of PSI in the thylakoid membrane. May target primarily the PsaC subunit. This Arabidopsis thaliana (Mouse-ear cress) protein is Tetratricopeptide repeat domain-containing protein PYG7, chloroplastic.